A 476-amino-acid chain; its full sequence is MKILHVCSELYPLLKTGGLADVLGALPQAQNQIGLDARVLLPAYPAIIAGIPNTQVVAEFDNFAGHVVLRYGEYNGVGIYLIDAPHLYGREGNPYHDAYYNDYGDNYKRFALLGWVGAELATGLDSWWRAEVVHAHDWHAGLCAAYLFNKGRPAKSVFTIHNLAYQGQFSYHHLYEIGLPTGMFHVEGLELFGQISYLKSGLFYSDASTAVSPTYAQEITTPEFAYGLQGLLSGLKAQDRLVGILNGVDENIWHPNVDQYIPHHYKLKYMAGKKKNKAELQAYFNLPQDESALAFVMVTRLTEQKGVDLLIESADEIVKQGGQLMILGSGAPHLEQGIRELAERYPQNIAVKIGYDEALSHLMVAGGDVILVPSRFEPCGLTQLYGLQYGTLPLVRKTGGLADTVVDSTSESIKACTATGFVFESATPEALRHCLQRAFALWQKPRAWAIVRTDAMAQDFSWRKAAEQYRALYERL.

Lysine 15 contributes to the ADP-alpha-D-glucose binding site.

Belongs to the glycosyltransferase 1 family. Bacterial/plant glycogen synthase subfamily.

The catalysed reaction is [(1-&gt;4)-alpha-D-glucosyl](n) + ADP-alpha-D-glucose = [(1-&gt;4)-alpha-D-glucosyl](n+1) + ADP + H(+). The protein operates within glycan biosynthesis; glycogen biosynthesis. Synthesizes alpha-1,4-glucan chains using ADP-glucose. In Haemophilus influenzae (strain PittGG), this protein is Glycogen synthase.